Here is a 173-residue protein sequence, read N- to C-terminus: MTTILVTGYKNFELGIFQDKDPKITIIKKAIKRDFIHFLEEGVDWFVFMGNLGFEYWALEVALSLQTEYDMQLATIFPFENHGEHWSEANQEKLFKFKQTDFVKSSYKRYQNSYQFKKYNQFLLDNTDRAYLFYDKDKETNLKYLYQMMTAKDNYPVSLLTFEDLDDIVQDFD.

This sequence belongs to the UPF0398 family.

The polypeptide is UPF0398 protein SMU_470 (Streptococcus mutans serotype c (strain ATCC 700610 / UA159)).